We begin with the raw amino-acid sequence, 190 residues long: Interferon alpha-11 (190 aa).

The signal sequence occupies residues M1 to G23. Disulfide bonds link C24–C122 and C52–C162. An N-linked (GlcNAc...) asparagine glycan is attached at N101.

It belongs to the alpha/beta interferon family. In terms of processing, N-glycosylated.

The protein localises to the secreted. In terms of biological role, has antiviral and antiproliferative activities. Produced by macrophages and stimulates the production of two enzymes: a protein kinase and an oligoadenylate synthetase. During viral infection, mediates antiviral effect, either directly by inducing interferon-stimulated genes, either indirectly through stimulation of natural killer cells enabling them to control viral replication. This chain is Interferon alpha-11 (Ifna11), found in Mus musculus (Mouse).